A 345-amino-acid polypeptide reads, in one-letter code: L-erythro-3,5-diaminohexanoate dehydrogenase (345 aa).

The protein belongs to the KDD family. In terms of assembly, homodimer.

The catalysed reaction is (3S,5S)-3,5-diaminohexanoate + NAD(+) + H2O = (5S)-5-amino-3-oxohexanoate + NH4(+) + NADH + H(+). The protein operates within amino-acid degradation; L-lysine degradation via acetate pathway. In terms of biological role, involved in the anaerobic fermentation of lysine. Catalyzes the oxidative deamination of L-erythro-3,5-diaminohexanoate (3,5-DAH) to 3-keto-5-aminohexanoate (KAH). It can use NAD or NADP. The protein is L-erythro-3,5-diaminohexanoate dehydrogenase of Fusobacterium nucleatum subsp. nucleatum (strain ATCC 25586 / DSM 15643 / BCRC 10681 / CIP 101130 / JCM 8532 / KCTC 2640 / LMG 13131 / VPI 4355).